Consider the following 533-residue polypeptide: Beta-1,4-mannosyl-glycoprotein 4-beta-N-acetylglucosaminyltransferase (533 aa).

The Cytoplasmic segment spans residues 1-7; sequence MKMRRYK. A helical; Signal-anchor for type II membrane protein membrane pass occupies residues 8–23; the sequence is LFLMFCMAGLCLISFL. Residues 24-533 are Lumenal-facing; that stretch reads HFFKTLSYVT…ARGKLDEAEV (510 aa). The disordered stretch occupies residues 119 to 158; the sequence is KPGTKMLERPPPGRPEEKPEGANGSSARRPPRYLLSARER. N-linked (GlcNAc...) asparagine glycans are attached at residues Asn-141, Asn-241, Asn-259, and Asn-397. The tract at residues 507-533 is disordered; sequence STAAGGWRHRGPEGRPPARGKLDEAEV.

This sequence belongs to the glycosyltransferase 17 family. As to quaternary structure, interacts with MGAT4D.

It is found in the golgi apparatus membrane. It catalyses the reaction N(4)-{beta-D-GlcNAc-(1-&gt;2)-alpha-D-Man-(1-&gt;3)-[beta-D-GlcNAc-(1-&gt;2)-alpha-D-Man-(1-&gt;6)]-beta-D-Man-(1-&gt;4)-beta-D-GlcNAc-(1-&gt;4)-beta-D-GlcNAc}-L-asparaginyl-[protein] + UDP-N-acetyl-alpha-D-glucosamine = N(4)-{beta-D-GlcNAc-(1-&gt;2)-alpha-D-Man-(1-&gt;3)-[beta-D-GlcNAc-(1-&gt;4)]-[beta-D-GlcNAc-(1-&gt;2)-alpha-D-Man-(1-&gt;6)]-beta-D-Man-(1-&gt;4)-beta-D-GlcNAc-(1-&gt;4)-beta-D-GlcNAc}-L-asparaginyl-[protein] + UDP + H(+). The protein operates within protein modification; protein glycosylation. It is involved in the regulation of the biosynthesis and biological function of glycoprotein oligosaccharides. Catalyzes the addition of N-acetylglucosamine in beta 1-4 linkage to the beta-linked mannose of the trimannosyl core of N-linked sugar chains, called bisecting N-acetylglucosamine (GlcNAc). It is one of the most important enzymes involved in the regulation of the biosynthesis of glycoprotein oligosaccharides. The addition of this bisecting GlcNAc residue alters not only the composition, but also the conformation of the N-glycan. The introduction of the bisecting GlcNAc residue results in the suppression of further processing and elongation of N-glycans, precluding the formation of beta-1,6 GlcNAc branching, catalyzed by MGAT5 since it is unable to use the bisected oligosaccharide as a substrate. Addition of bisecting N-acetylglucosamine to CDH1/E-cadherin modulates CDH1 cell membrane location. Inhibits NeuAc-alpha-2,3-Gal-beta-1,4-GlcNAc- formation which modulates sialylation levels and plays a role in cell migration regulation. In brain, addition of bisecting N-acetylglucosamine to BACE1 blocks its lysosomal targeting in response to oxidative stress and further degradation which increases its location to early endosome and the APP cleavage. The polypeptide is Beta-1,4-mannosyl-glycoprotein 4-beta-N-acetylglucosaminyltransferase (Homo sapiens (Human)).